The chain runs to 259 residues: Cytosolic Fe-S cluster assembly factor Nubp2 homolog (259 aa).

Position 14–21 (14–21) interacts with ATP; the sequence is GKGGVGKS. Cys188 and Cys191 together coordinate [4Fe-4S] cluster.

Belongs to the Mrp/NBP35 ATP-binding proteins family. NUBP2/CFD1 subfamily. As to quaternary structure, heterotetramer of 2 Nubp1 and 2 Nubp2 chains. [4Fe-4S] cluster serves as cofactor.

Its subcellular location is the cytoplasm. Its function is as follows. Component of the cytosolic iron-sulfur (Fe/S) protein assembly (CIA) machinery. Required for maturation of extramitochondrial Fe-S proteins. The Nubp1-Nubp2 heterotetramer forms a Fe-S scaffold complex, mediating the de novo assembly of an Fe-S cluster and its transfer to target apoproteins. The chain is Cytosolic Fe-S cluster assembly factor Nubp2 homolog from Aedes aegypti (Yellowfever mosquito).